A 394-amino-acid chain; its full sequence is Phosphopentomutase (394 aa).

Positions 14, 287, 292, 328, 329, and 340 each coordinate Mn(2+).

Belongs to the phosphopentomutase family. Mn(2+) is required as a cofactor.

The protein localises to the cytoplasm. The catalysed reaction is 2-deoxy-alpha-D-ribose 1-phosphate = 2-deoxy-D-ribose 5-phosphate. The enzyme catalyses alpha-D-ribose 1-phosphate = D-ribose 5-phosphate. It participates in carbohydrate degradation; 2-deoxy-D-ribose 1-phosphate degradation; D-glyceraldehyde 3-phosphate and acetaldehyde from 2-deoxy-alpha-D-ribose 1-phosphate: step 1/2. Functionally, isomerase that catalyzes the conversion of deoxy-ribose 1-phosphate (dRib-1-P) and ribose 1-phosphate (Rib-1-P) to deoxy-ribose 5-phosphate (dRib-5-P) and ribose 5-phosphate (Rib-5-P), respectively. The chain is Phosphopentomutase from Listeria monocytogenes serotype 4a (strain HCC23).